Reading from the N-terminus, the 618-residue chain is DnaJ homolog subfamily C member 2 (618 aa).

The region spanning 85-158 (DHYAVLGLAH…VKRRAFDSVD (74 aa)) is the J domain. 3 disordered regions span residues 281-315 (KEEE…QQEE), 330-349 (QAAQ…IKKE), and 419-448 (LQKE…QNNR). Over residues 428–448 (QAQQAARGSEHSSAAGGQNNR) the composition is skewed to polar residues. SANT domains lie at 445 to 507 (QNNR…KLDP) and 548 to 603 (SNAA…EMIK).

In terms of assembly, component of ribosome-associated complex (RAC).

It is found in the nucleus. It localises to the cytoplasm. The protein resides in the cytosol. Functionally, acts both as a chaperone in the cytosol and as a chromatin regulator in the nucleus. When cytosolic, acts as a molecular chaperone: component of the ribosome-associated complex (RAC), a complex involved in folding or maintaining nascent polypeptides in a folding-competent state. When nuclear, mediates the switching from polycomb-repressed genes to an active state: specifically recruited at histone H2A ubiquitinated at 'Lys-119' (H2AK119ub), and promotes the displacement of the polycomb PRC1 complex from chromatin, thereby facilitating transcription activation. This Danio rerio (Zebrafish) protein is DnaJ homolog subfamily C member 2 (dnajc2).